A 92-amino-acid chain; its full sequence is Small integral membrane protein 12 (92 aa).

Residues 15–34 traverse the membrane as a helical segment; it reads YVTFPVAFVVGAVGYHLEWF.

This sequence belongs to the SMIM12 family.

The protein localises to the membrane. This chain is Small integral membrane protein 12 (Smim12), found in Mus musculus (Mouse).